Consider the following 219-residue polypeptide: Zinc finger C2HC domain-containing protein 1B (219 aa).

C2HC/C3H-type zinc fingers lie at residues 14–43 (ELFP…LFNK) and 117–146 (DYIQ…QESR). The Zn(2+) site is built by Cys18, Cys21, His33, Cys37, Cys121, Cys124, His136, and Cys140. Residues 190–219 (EASAAPTRPAVDPASGAKLRQGFAKSSKKD) are disordered.

This sequence belongs to the ZC2HC1 family. The cofactor is Zn(2+).

The protein is Zinc finger C2HC domain-containing protein 1B (ZC2HC1B) of Bos taurus (Bovine).